Here is a 272-residue protein sequence, read N- to C-terminus: Putative G-protein coupled receptor GPR32P1 (272 aa).

Residues 1–24 are disordered; the sequence is MNGVSEGTRGCSDRQPGALTQGHS. Topologically, residues 1 to 46 are extracellular; it reads MNGVSEGTRGCSDRQPGALTQGHSCSRKMNASRCLSEEVGSLRPLT. Asn30 carries N-linked (GlcNAc...) asparagine glycosylation. A helical membrane pass occupies residues 47-67; that stretch reads MAVLSASFVVGVLGNGLVPWV. Residues 68-78 are Cytoplasmic-facing; the sequence is TVFRMARTVST. A helical transmembrane segment spans residues 79–99; sequence VCFFHLALADFMLSLSLPILV. Residues 100–116 lie on the Extracellular side of the membrane; it reads YYIVSRQWLLGEWACKL. The cysteines at positions 114 and 191 are disulfide-linked. A helical membrane pass occupies residues 117–137; sequence YTGFVFLTFSTSNCLLVLISV. At 138 to 158 the chain is on the cytoplasmic side; that stretch reads DRCISVLYPVWALNHRTEQRA. Residues 159 to 179 traverse the membrane as a helical segment; sequence SWLAFGVWLLAAALCSAHLKF. Over 180 to 213 the chain is Extracellular; that stretch reads RTTRKWNGCMQCYLQFNLENETAQMWTQEVFGRQ. A glycan (N-linked (GlcNAc...) asparagine) is linked at Asn199. The chain crosses the membrane as a helical span at residues 214–234; that stretch reads MAVIMAHFLLGFLGPLAIIGT. Over 235 to 272 the chain is Cytoplasmic; that stretch reads CAHLIRAKLLREGWVHANRPKRLLLVLVSALSAGSHLT.

Belongs to the G-protein coupled receptor 1 family.

The protein resides in the cell membrane. Its function is as follows. Orphan receptor. In Homo sapiens (Human), this protein is Putative G-protein coupled receptor GPR32P1 (GPR32P1).